The sequence spans 269 residues: Eukaryotic translation initiation factor 3 subunit G (269 aa).

A disordered region spans residues Ala140 to Asp181. The segment covering Ile141–Ser154 has biased composition (gly residues). Ser161 bears the Phosphoserine mark. Positions Lys184 to Pro263 constitute an RRM domain.

Belongs to the eIF-3 subunit G family. Component of the eukaryotic translation initiation factor 3 (eIF-3) complex.

The protein resides in the cytoplasm. Functionally, RNA-binding component of the eukaryotic translation initiation factor 3 (eIF-3) complex, which is involved in protein synthesis of a specialized repertoire of mRNAs and, together with other initiation factors, stimulates binding of mRNA and methionyl-tRNAi to the 40S ribosome. The eIF-3 complex specifically targets and initiates translation of a subset of mRNAs involved in cell proliferation. This subunit can bind 18S rRNA. In Kluyveromyces lactis (strain ATCC 8585 / CBS 2359 / DSM 70799 / NBRC 1267 / NRRL Y-1140 / WM37) (Yeast), this protein is Eukaryotic translation initiation factor 3 subunit G.